We begin with the raw amino-acid sequence, 616 residues long: Chaperone protein HscA (616 aa).

It belongs to the heat shock protein 70 family.

In terms of biological role, chaperone involved in the maturation of iron-sulfur cluster-containing proteins. Has a low intrinsic ATPase activity which is markedly stimulated by HscB. Involved in the maturation of IscU. The sequence is that of Chaperone protein HscA from Enterobacter sp. (strain 638).